The primary structure comprises 271 residues: uncharacterized protein (271 aa).

This is an uncharacterized protein from Azospirillum brasilense.